The chain runs to 176 residues: 3-hydroxydecanoyl-[acyl-carrier-protein] dehydratase (176 aa).

Histidine 75 is a catalytic residue.

It belongs to the thioester dehydratase family. FabA subfamily. Homodimer.

It is found in the cytoplasm. The catalysed reaction is a (3R)-hydroxyacyl-[ACP] = a (2E)-enoyl-[ACP] + H2O. The enzyme catalyses (3R)-hydroxydecanoyl-[ACP] = (2E)-decenoyl-[ACP] + H2O. It catalyses the reaction (2E)-decenoyl-[ACP] = (3Z)-decenoyl-[ACP]. Its pathway is lipid metabolism; fatty acid biosynthesis. Functionally, necessary for the introduction of cis unsaturation into fatty acids. Catalyzes the dehydration of (3R)-3-hydroxydecanoyl-ACP to E-(2)-decenoyl-ACP and then its isomerization to Z-(3)-decenoyl-ACP. Can catalyze the dehydratase reaction for beta-hydroxyacyl-ACPs with saturated chain lengths up to 16:0, being most active on intermediate chain length. In Haemophilus ducreyi (strain 35000HP / ATCC 700724), this protein is 3-hydroxydecanoyl-[acyl-carrier-protein] dehydratase.